The following is a 351-amino-acid chain: Molybdenum import ATP-binding protein ModC (351 aa).

Positions 1 to 229 constitute an ABC transporter domain; sequence MLEINIHQQL…DILADWQSET (229 aa). 31–38 is an ATP binding site; it reads GRSGAGKS. Residues 290-351 enclose the Mop domain; that stretch reads HSSIRNILNG…IYVQIKSVSL (62 aa).

It belongs to the ABC transporter superfamily. Molybdate importer (TC 3.A.1.8) family. As to quaternary structure, the complex is composed of two ATP-binding proteins (ModC), two transmembrane proteins (ModB) and a solute-binding protein (ModA).

It localises to the cell inner membrane. The enzyme catalyses molybdate(out) + ATP + H2O = molybdate(in) + ADP + phosphate + H(+). Its function is as follows. Part of the ABC transporter complex ModABC involved in molybdenum import. Responsible for energy coupling to the transport system. This is Molybdenum import ATP-binding protein ModC from Haemophilus ducreyi (strain 35000HP / ATCC 700724).